A 324-amino-acid polypeptide reads, in one-letter code: Ribosomal RNA small subunit methyltransferase H (324 aa).

S-adenosyl-L-methionine-binding positions include 35-37 (GGH), D55, F85, D103, and Q110.

Belongs to the methyltransferase superfamily. RsmH family.

It localises to the cytoplasm. It catalyses the reaction cytidine(1402) in 16S rRNA + S-adenosyl-L-methionine = N(4)-methylcytidine(1402) in 16S rRNA + S-adenosyl-L-homocysteine + H(+). Functionally, specifically methylates the N4 position of cytidine in position 1402 (C1402) of 16S rRNA. The polypeptide is Ribosomal RNA small subunit methyltransferase H (Solidesulfovibrio magneticus (strain ATCC 700980 / DSM 13731 / RS-1) (Desulfovibrio magneticus)).